A 344-amino-acid chain; its full sequence is RNA 3'-terminal phosphate cyclase (344 aa).

Residues Gln-103 and 283–287 (HLADQ) each bind ATP. The Tele-AMP-histidine intermediate role is filled by His-308.

This sequence belongs to the RNA 3'-terminal cyclase family. Type 1 subfamily.

Its subcellular location is the cytoplasm. It carries out the reaction a 3'-end 3'-phospho-ribonucleotide-RNA + ATP = a 3'-end 2',3'-cyclophospho-ribonucleotide-RNA + AMP + diphosphate. Functionally, catalyzes the conversion of 3'-phosphate to a 2',3'-cyclic phosphodiester at the end of RNA. The mechanism of action of the enzyme occurs in 3 steps: (A) adenylation of the enzyme by ATP; (B) transfer of adenylate to an RNA-N3'P to produce RNA-N3'PP5'A; (C) and attack of the adjacent 2'-hydroxyl on the 3'-phosphorus in the diester linkage to produce the cyclic end product. The biological role of this enzyme is unknown but it is likely to function in some aspects of cellular RNA processing. This is RNA 3'-terminal phosphate cyclase from Salmonella paratyphi C (strain RKS4594).